The primary structure comprises 551 residues: Chitinase (551 aa).

The first 17 residues, 1 to 17, serve as a signal peptide directing secretion; that stretch reads MLYKLLNVLWLVAVSNA. Residues 1–149 form a chitin binding domain (CBD) region; that stretch reads MLYKLLNVLW…NKPGRREDKI (149 aa). In terms of domain architecture, GH18 spans 148–548; it reads KIVAAYFVEW…NAINAQFKPK (401 aa). Asn173 carries N-linked (GlcNAc...) asparagine; by host glycosylation. The active-site Proton donor is Glu305. Asn444 carries an N-linked (GlcNAc...) asparagine; by host glycan. Residues 548–551 carry the Prevents secretion from ER motif; it reads KDEL.

It belongs to the glycosyl hydrolase 18 family. Chitinase class II subfamily. Interacts with host VCATH.

The protein localises to the host endoplasmic reticulum lumen. The enzyme catalyses Random endo-hydrolysis of N-acetyl-beta-D-glucosaminide (1-&gt;4)-beta-linkages in chitin and chitodextrins.. Functionally, plays a role in host liquefaction to facilitate horizontal transmission of the virus by hydrolyzing beta-chitin and by regulating the cysteine protease VCATH. Localized in the host reticulum endoplasmic via its KDEL motif, interacts with and thus prevents VCATH secretion before host cell lysis occurs. The protein is Chitinase (CHIA) of Lepidoptera (butterflies and moths).